A 643-amino-acid chain; its full sequence is uncharacterized protein (643 aa).

The span at 179 to 199 (FKSSQLQQSPSPNKKSPSYSQ) shows a compositional bias: low complexity. Disordered stretches follow at residues 179–200 (FKSSQLQQSPSPNKKSPSYSQV) and 349–377 (KRSNSIDRAGIRSRRRSHSSPERSTSTEN).

This is an uncharacterized protein from Caenorhabditis elegans.